A 184-amino-acid chain; its full sequence is Adenylate kinase (184 aa).

An ATP-binding site is contributed by 12–17 (GAGKGT). The tract at residues 32–61 (STGELLRKEIDLDTDLGKQVKDIMNRGELV) is NMP. Residues Thr-33, Arg-38, 59–61 (ELV), 85–88 (GYPR), and Gln-92 each bind AMP. An LID region spans residues 126 to 132 (IRGRKDD). Arg-127 contacts ATP. AMP contacts are provided by Arg-129 and Arg-140. Residue Gly-168 coordinates ATP.

It belongs to the adenylate kinase family. As to quaternary structure, monomer.

Its subcellular location is the cytoplasm. It catalyses the reaction AMP + ATP = 2 ADP. The protein operates within purine metabolism; AMP biosynthesis via salvage pathway; AMP from ADP: step 1/1. Functionally, catalyzes the reversible transfer of the terminal phosphate group between ATP and AMP. Plays an important role in cellular energy homeostasis and in adenine nucleotide metabolism. This chain is Adenylate kinase, found in Prochlorococcus marinus subsp. pastoris (strain CCMP1986 / NIES-2087 / MED4).